A 260-amino-acid chain; its full sequence is Hemin import ATP-binding protein HmuV (260 aa).

The 237-residue stretch at 6-242 (LHADNLHYRA…VQLRACYQAD (237 aa)) folds into the ABC transporter domain. 38–45 (GPNGAGKS) lines the ATP pocket.

The protein belongs to the ABC transporter superfamily. Heme (hemin) importer (TC 3.A.1.14.5) family. In terms of assembly, the complex is composed of two ATP-binding proteins (HmuV), two transmembrane proteins (HmuU) and a solute-binding protein (HmuT).

It localises to the cell inner membrane. Functionally, part of the ABC transporter complex HmuTUV involved in hemin import. Responsible for energy coupling to the transport system. This chain is Hemin import ATP-binding protein HmuV, found in Sodalis glossinidius (strain morsitans).